Here is a 190-residue protein sequence, read N- to C-terminus: ATP synthase subunit delta (190 aa).

It belongs to the ATPase delta chain family. In terms of assembly, F-type ATPases have 2 components, F(1) - the catalytic core - and F(0) - the membrane proton channel. F(1) has five subunits: alpha(3), beta(3), gamma(1), delta(1), epsilon(1). F(0) has three main subunits: a(1), b(2) and c(10-14). The alpha and beta chains form an alternating ring which encloses part of the gamma chain. F(1) is attached to F(0) by a central stalk formed by the gamma and epsilon chains, while a peripheral stalk is formed by the delta and b chains.

Its subcellular location is the cell inner membrane. Functionally, f(1)F(0) ATP synthase produces ATP from ADP in the presence of a proton or sodium gradient. F-type ATPases consist of two structural domains, F(1) containing the extramembraneous catalytic core and F(0) containing the membrane proton channel, linked together by a central stalk and a peripheral stalk. During catalysis, ATP synthesis in the catalytic domain of F(1) is coupled via a rotary mechanism of the central stalk subunits to proton translocation. In terms of biological role, this protein is part of the stalk that links CF(0) to CF(1). It either transmits conformational changes from CF(0) to CF(1) or is implicated in proton conduction. This chain is ATP synthase subunit delta, found in Methylobacterium nodulans (strain LMG 21967 / CNCM I-2342 / ORS 2060).